The chain runs to 244 residues: Reticulon-like protein B7 (244 aa).

Residues 70-244 form the Reticulon domain; it reads PADVLLWRDK…EAKFLSKIPH (175 aa). 3 helical membrane-spanning segments follow: residues 80–100, 103–123, and 172–192; these read KVTL…GFGG, LLTS…LWSN, and FVMA…FSFL.

It is found in the endoplasmic reticulum membrane. This Arabidopsis thaliana (Mouse-ear cress) protein is Reticulon-like protein B7 (RTNLB7).